Consider the following 1026-residue polypeptide: Lon protease homolog, mitochondrial (1026 aa).

The N-terminal 29 residues, 1-29, are a transit peptide targeting the mitochondrion; it reads MLGTRVTRAVYTRAPLKLQLRALGLHRRY. Disordered regions lie at residues 29–55 and 185–206; these read YVHN…DKKL and ASEE…DKVS. Positions 62-345 constitute a Lon N-terminal domain; it reads MLALPISRRP…KSLLVLKKEL (284 aa). Acidic residues predominate over residues 185-194; that stretch reads ASEETKDEET. Basic and acidic residues predominate over residues 195–206; that stretch reads VDKTESATDKVS. Residue 497-504 coordinates ATP; the sequence is GPPGVGKT. Residues 711 to 785 form a disordered region; it reads TEPLVSTSEE…EEEEDTSMIV (75 aa). Polar residues predominate over residues 714–737; it reads LVSTSEEPQLSQTNQNISSSSAED. The Lon proteolytic domain maps to 815–1001; sequence TTPPGVIMGL…DDIYKRLFSG (187 aa). Active-site residues include Ser907 and Lys950.

Belongs to the peptidase S16 family. In terms of assembly, homohexamer or homoheptamer. Organized in a ring with a central cavity.

The protein localises to the mitochondrion matrix. It catalyses the reaction Hydrolysis of proteins in presence of ATP.. In terms of biological role, ATP-dependent serine protease that mediates the selective degradation of misfolded, unassembled or oxidatively damaged polypeptides as well as certain short-lived regulatory proteins in the mitochondrial matrix. May also have a chaperone function in the assembly of inner membrane protein complexes. Participates in the regulation of mitochondrial gene expression and in the maintenance of the integrity of the mitochondrial genome. Binds to mitochondrial DNA in a site-specific manner. The sequence is that of Lon protease homolog, mitochondrial from Candida glabrata (strain ATCC 2001 / BCRC 20586 / JCM 3761 / NBRC 0622 / NRRL Y-65 / CBS 138) (Yeast).